The sequence spans 119 residues: Large ribosomal subunit protein uL14 (119 aa).

This sequence belongs to the universal ribosomal protein uL14 family. In terms of assembly, part of the 50S ribosomal subunit. Forms a cluster with proteins L3 and L19. In the 70S ribosome, L14 and L19 interact and together make contacts with the 16S rRNA in bridges B5 and B8.

In terms of biological role, binds to 23S rRNA. Forms part of two intersubunit bridges in the 70S ribosome. The sequence is that of Large ribosomal subunit protein uL14 from Ehrlichia ruminantium (strain Gardel).